The chain runs to 318 residues: Probable serine/threonine-protein kinase MRK1 homolog (318 aa).

The Protein kinase domain maps to 40–313 (YRYVEMIGRG…ASELLRKQFF (274 aa)). Residues 46 to 54 (IGRGSFGVV) and Lys68 each bind ATP. The active-site Proton acceptor is the Asp159.

It belongs to the protein kinase superfamily. CMGC Ser/Thr protein kinase family. GSK-3 subfamily.

The protein localises to the cytoplasm. The protein resides in the nucleus. It catalyses the reaction L-seryl-[protein] + ATP = O-phospho-L-seryl-[protein] + ADP + H(+). The catalysed reaction is L-threonyl-[protein] + ATP = O-phospho-L-threonyl-[protein] + ADP + H(+). Its function is as follows. May play a role in the initiation and completion of mitosis. This Encephalitozoon cuniculi (strain GB-M1) (Microsporidian parasite) protein is Probable serine/threonine-protein kinase MRK1 homolog (MRK1).